The sequence spans 107 residues: Probable antitoxin TacA (107 aa).

Belongs to the TacA antitoxin family. Forms a complex with cognate antitoxin TacT.

Its function is as follows. Probable antitoxin component of a type II toxin-antitoxin (TA) system. Should neutralize cognate toxin TacT (y4aS). The chain is Probable antitoxin TacA from Sinorhizobium fredii (strain NBRC 101917 / NGR234).